A 505-amino-acid chain; its full sequence is Glycerol kinase 3 (505 aa).

T12 serves as a coordination point for ADP. Residues T12, T13, and S14 each coordinate ATP. T12 provides a ligand contact to sn-glycerol 3-phosphate. Residue R16 participates in ADP binding. Sn-glycerol 3-phosphate contacts are provided by R82, E83, Y134, and D249. Positions 82, 83, 134, 249, and 250 each coordinate glycerol. The ADP site is built by T271 and G315. Positions 271, 315, 319, and 416 each coordinate ATP. ADP is bound by residues G416 and N420.

Belongs to the FGGY kinase family.

It catalyses the reaction glycerol + ATP = sn-glycerol 3-phosphate + ADP + H(+). It participates in polyol metabolism; glycerol degradation via glycerol kinase pathway; sn-glycerol 3-phosphate from glycerol: step 1/1. With respect to regulation, inhibited by fructose 1,6-bisphosphate (FBP). Its function is as follows. Key enzyme in the regulation of glycerol uptake and metabolism. Catalyzes the phosphorylation of glycerol to yield sn-glycerol 3-phosphate. This Streptomyces avermitilis (strain ATCC 31267 / DSM 46492 / JCM 5070 / NBRC 14893 / NCIMB 12804 / NRRL 8165 / MA-4680) protein is Glycerol kinase 3.